We begin with the raw amino-acid sequence, 1424 residues long: DNA-directed RNA polymerase subunit beta' (1424 aa).

Zn(2+) contacts are provided by cysteine 60, cysteine 62, cysteine 75, and cysteine 78. Residues aspartate 449, aspartate 451, and aspartate 453 each contribute to the Mg(2+) site. Cysteine 783, cysteine 857, cysteine 864, and cysteine 867 together coordinate Zn(2+).

This sequence belongs to the RNA polymerase beta' chain family. As to quaternary structure, the RNAP catalytic core consists of 2 alpha, 1 beta, 1 beta' and 1 omega subunit. When a sigma factor is associated with the core the holoenzyme is formed, which can initiate transcription. It depends on Mg(2+) as a cofactor. The cofactor is Zn(2+).

It catalyses the reaction RNA(n) + a ribonucleoside 5'-triphosphate = RNA(n+1) + diphosphate. DNA-dependent RNA polymerase catalyzes the transcription of DNA into RNA using the four ribonucleoside triphosphates as substrates. The chain is DNA-directed RNA polymerase subunit beta' from Treponema denticola (strain ATCC 35405 / DSM 14222 / CIP 103919 / JCM 8153 / KCTC 15104).